Reading from the N-terminus, the 484-residue chain is Glutamate mutase epsilon subunit (484 aa).

Position 66 (Arg-66) interacts with L-glutamate. Gly-68 is an adenosylcob(III)alamin binding site. L-glutamate is bound at residue Arg-100. Adenosylcob(III)alamin is bound at residue Asn-123. L-glutamate contacts are provided by residues 149-150, Glu-171, and Tyr-177; that span reads RH. An adenosylcob(III)alamin-binding site is contributed by Pro-180. Tyr-181 lines the L-glutamate pocket. Adenosylcob(III)alamin is bound by residues Phe-297, Lys-326, Glu-330, and Ile-334.

This sequence belongs to the methylaspartate mutase GlmE subunit family. As to quaternary structure, heterotetramer composed of 2 epsilon subunits (GlmE) and 2 sigma subunits (GlmS). GlmE exists as a homodimer and GlmS as a monomer. Adenosylcob(III)alamin serves as cofactor.

It catalyses the reaction (2S,3S)-3-methyl-L-aspartate = L-glutamate. The protein operates within amino-acid degradation; L-glutamate degradation via mesaconate pathway; acetate and pyruvate from L-glutamate: step 1/4. In terms of biological role, catalyzes the carbon skeleton rearrangement of L-glutamate to L-threo-3-methylaspartate ((2S,3S)-3-methylaspartate). This Desulfitobacterium hafniense (strain Y51) protein is Glutamate mutase epsilon subunit.